The following is a 398-amino-acid chain: Probable transcription factor PosF21 (398 aa).

2 disordered regions span residues 1–46 (MDKE…HDIS) and 112–150 (ATSS…NSLG). Residues 7–19 (PAPPCGGLPPPSP) are compositionally biased toward pro residues. Polar residues predominate over residues 125–148 (AWKNETMMQTGTGSTSNPQNTVNS). Residues 201–264 (DPKRAKRIWA…NGLTVENNEL (64 aa)) form the bZIP domain. Residues 203–224 (KRAKRIWANRQSAARSKERKTR) form a basic motif region. A leucine-zipper region spans residues 229–264 (LERKVQTLQTEATTLSAQLTLLQRDTNGLTVENNEL).

This sequence belongs to the bZIP family.

It is found in the nucleus. Putative transcription factor with an activatory role. The sequence is that of Probable transcription factor PosF21 (POSF21) from Arabidopsis thaliana (Mouse-ear cress).